The chain runs to 394 residues: Queuine tRNA-ribosyltransferase (394 aa).

The Proton acceptor role is filled by D95. Substrate-binding positions include 95-99 (DSGGF), D149, Q190, and G217. The interval 248 to 254 (GVGTPID) is RNA binding. D267 (nucleophile) is an active-site residue. The RNA binding; important for wobble base 34 recognition stretch occupies residues 272-276 (TRNAR). Zn(2+) is bound by residues C305, C307, C310, and H337. The interval 375–394 (NDANETVGATESTESTESTE) is disordered.

It belongs to the queuine tRNA-ribosyltransferase family. In terms of assembly, homodimer. Within each dimer, one monomer is responsible for RNA recognition and catalysis, while the other monomer binds to the replacement base PreQ1. Zn(2+) serves as cofactor.

It carries out the reaction 7-aminomethyl-7-carbaguanine + guanosine(34) in tRNA = 7-aminomethyl-7-carbaguanosine(34) in tRNA + guanine. Its pathway is tRNA modification; tRNA-queuosine biosynthesis. Functionally, catalyzes the base-exchange of a guanine (G) residue with the queuine precursor 7-aminomethyl-7-deazaguanine (PreQ1) at position 34 (anticodon wobble position) in tRNAs with GU(N) anticodons (tRNA-Asp, -Asn, -His and -Tyr). Catalysis occurs through a double-displacement mechanism. The nucleophile active site attacks the C1' of nucleotide 34 to detach the guanine base from the RNA, forming a covalent enzyme-RNA intermediate. The proton acceptor active site deprotonates the incoming PreQ1, allowing a nucleophilic attack on the C1' of the ribose to form the product. After dissociation, two additional enzymatic reactions on the tRNA convert PreQ1 to queuine (Q), resulting in the hypermodified nucleoside queuosine (7-(((4,5-cis-dihydroxy-2-cyclopenten-1-yl)amino)methyl)-7-deazaguanosine). This is Queuine tRNA-ribosyltransferase from Sorangium cellulosum (strain So ce56) (Polyangium cellulosum (strain So ce56)).